Here is a 419-residue protein sequence, read N- to C-terminus: Probable pectate lyase C (419 aa).

Residues Met1–Ala19 form the signal peptide. 3 N-linked (GlcNAc...) asparagine glycosylation sites follow: Asn48, Asn164, and Asn201. Residue Arg204 is part of the active site. The EF-hand domain maps to Asn261–Met296. Residues Asp274, Asp276, Asp278, and Thr280 each coordinate Ca(2+). N-linked (GlcNAc...) asparagine glycosylation is present at Asn282. Glu285 serves as a coordination point for Ca(2+). Positions Ala350 to Ser395 are disordered. Low complexity predominate over residues Asp363–Asp372. Positions Thr373–Leu386 are enriched in acidic residues.

It belongs to the polysaccharide lyase 1 family. Ca(2+) serves as cofactor.

The protein localises to the secreted. The catalysed reaction is Eliminative cleavage of (1-&gt;4)-alpha-D-galacturonan to give oligosaccharides with 4-deoxy-alpha-D-galact-4-enuronosyl groups at their non-reducing ends.. In terms of biological role, pectinolytic enzyme consist of four classes of enzymes: pectin lyase, polygalacturonase, pectin methylesterase and rhamnogalacturonase. Among pectinolytic enzymes, pectin lyase is the most important in depolymerization of pectin, since it cleaves internal glycosidic bonds of highly methylated pectins. Favors pectate, the anion, over pectin, the methyl ester. The polypeptide is Probable pectate lyase C (plyC) (Aspergillus flavus (strain ATCC 200026 / FGSC A1120 / IAM 13836 / NRRL 3357 / JCM 12722 / SRRC 167)).